We begin with the raw amino-acid sequence, 261 residues long: 3-deoxy-manno-octulosonate cytidylyltransferase (261 aa).

It belongs to the KdsB family.

Its subcellular location is the cytoplasm. The catalysed reaction is 3-deoxy-alpha-D-manno-oct-2-ulosonate + CTP = CMP-3-deoxy-beta-D-manno-octulosonate + diphosphate. It participates in nucleotide-sugar biosynthesis; CMP-3-deoxy-D-manno-octulosonate biosynthesis; CMP-3-deoxy-D-manno-octulosonate from 3-deoxy-D-manno-octulosonate and CTP: step 1/1. Its pathway is bacterial outer membrane biogenesis; lipopolysaccharide biosynthesis. In terms of biological role, activates KDO (a required 8-carbon sugar) for incorporation into bacterial lipopolysaccharide in Gram-negative bacteria. The polypeptide is 3-deoxy-manno-octulosonate cytidylyltransferase (Dechloromonas aromatica (strain RCB)).